Reading from the N-terminus, the 139-residue chain is Ribulose bisphosphate carboxylase small subunit, plasmid (139 aa).

It belongs to the RuBisCO small chain family. Heterohexadecamer of 8 large and 8 small subunits.

RuBisCO catalyzes two reactions: the carboxylation of D-ribulose 1,5-bisphosphate, the primary event in carbon dioxide fixation, as well as the oxidative fragmentation of the pentose substrate. Both reactions occur simultaneously and in competition at the same active site. Although the small subunit is not catalytic it is essential for maximal activity. The sequence is that of Ribulose bisphosphate carboxylase small subunit, plasmid from Cupriavidus necator (strain ATCC 17699 / DSM 428 / KCTC 22496 / NCIMB 10442 / H16 / Stanier 337) (Ralstonia eutropha).